The primary structure comprises 405 residues: Glucose-1-phosphate adenylyltransferase 1 (405 aa).

Residues Tyr96, Gly161, 176–177 (EK), and Ser194 each bind alpha-D-glucose 1-phosphate.

Belongs to the bacterial/plant glucose-1-phosphate adenylyltransferase family. Homotetramer.

It carries out the reaction alpha-D-glucose 1-phosphate + ATP + H(+) = ADP-alpha-D-glucose + diphosphate. It participates in glycan biosynthesis; glycogen biosynthesis. Its function is as follows. Involved in the biosynthesis of ADP-glucose, a building block required for the elongation reactions to produce glycogen. Catalyzes the reaction between ATP and alpha-D-glucose 1-phosphate (G1P) to produce pyrophosphate and ADP-Glc. The polypeptide is Glucose-1-phosphate adenylyltransferase 1 (Vibrio cholerae serotype O1 (strain ATCC 39315 / El Tor Inaba N16961)).